We begin with the raw amino-acid sequence, 538 residues long: Phosphoenolpyruvate carboxykinase (ATP) (538 aa).

Residues arginine 61, tyrosine 195, and lysine 201 each coordinate substrate. Residues lysine 201, histidine 220, and 236–244 (GLSGTGKTT) each bind ATP. Residues lysine 201 and histidine 220 each coordinate Mn(2+). Aspartate 257 lines the Mn(2+) pocket. ATP is bound by residues glutamate 285, arginine 323, and threonine 449. Arginine 323 serves as a coordination point for substrate.

The protein belongs to the phosphoenolpyruvate carboxykinase (ATP) family. Mn(2+) serves as cofactor.

The protein resides in the cytoplasm. It carries out the reaction oxaloacetate + ATP = phosphoenolpyruvate + ADP + CO2. The protein operates within carbohydrate biosynthesis; gluconeogenesis. Functionally, involved in the gluconeogenesis. Catalyzes the conversion of oxaloacetate (OAA) to phosphoenolpyruvate (PEP) through direct phosphoryl transfer between the nucleoside triphosphate and OAA. The chain is Phosphoenolpyruvate carboxykinase (ATP) from Bradyrhizobium diazoefficiens (strain JCM 10833 / BCRC 13528 / IAM 13628 / NBRC 14792 / USDA 110).